Here is a 206-residue protein sequence, read N- to C-terminus: Ribosomal RNA large subunit methyltransferase E (206 aa).

S-adenosyl-L-methionine-binding residues include G60, W62, D80, N96, and D121. Catalysis depends on K161, which acts as the Proton acceptor.

The protein belongs to the class I-like SAM-binding methyltransferase superfamily. RNA methyltransferase RlmE family.

The protein resides in the cytoplasm. It catalyses the reaction uridine(2552) in 23S rRNA + S-adenosyl-L-methionine = 2'-O-methyluridine(2552) in 23S rRNA + S-adenosyl-L-homocysteine + H(+). Specifically methylates the uridine in position 2552 of 23S rRNA at the 2'-O position of the ribose in the fully assembled 50S ribosomal subunit. This Francisella philomiragia subsp. philomiragia (strain ATCC 25017 / CCUG 19701 / FSC 153 / O#319-036) protein is Ribosomal RNA large subunit methyltransferase E.